The sequence spans 96 residues: uncharacterized protein (96 aa).

An N-terminal signal peptide occupies residues 1–19 (MKFLSALLLIVLLISVVFG). A glycan (N-linked (GlcNAc...) asparagine) is linked at Asn-20. Over residues 27–46 (AWATTTTGGTTGSQTSPATH) the composition is skewed to low complexity. Residues 27–58 (AWATTTTGGTTGSQTSPATHGGHGGNGGNGHS) form a disordered region. Positions 47–56 (GGHGGNGGNG) are enriched in gly residues.

The protein resides in the secreted. This is an uncharacterized protein from Dictyostelium discoideum (Social amoeba).